The sequence spans 389 residues: Endonuclease 8-like 1 (389 aa).

The Schiff-base intermediate with DNA role is filled by Pro-2. Glu-3 functions as the Proton donor in the catalytic mechanism. Lys-54 serves as the catalytic Proton donor; for beta-elimination activity. Asn-176 provides a ligand contact to DNA. A disordered region spans residues 278–389 (TIWFQGDPGP…PREAGESSAS (112 aa)). Over residues 322-333 (SRMRRARKHPPK) the composition is skewed to basic residues. Over residues 336–351 (AQQSEGAGLQQNQETP) the composition is skewed to polar residues. Residues 357 to 373 (GKRRGQRASTGHRRRPK) show a composition bias toward basic residues. A compositionally biased stretch (basic and acidic residues) spans 374–389 (TIPDTRPREAGESSAS).

The protein belongs to the FPG family. As to expression, detected in heart, spleen and lung.

Its subcellular location is the cytoplasm. It localises to the cytoskeleton. The protein localises to the microtubule organizing center. It is found in the centrosome. The protein resides in the nucleus. Its subcellular location is the chromosome. It carries out the reaction 2'-deoxyribonucleotide-(2'-deoxyribose 5'-phosphate)-2'-deoxyribonucleotide-DNA = a 3'-end 2'-deoxyribonucleotide-(2,3-dehydro-2,3-deoxyribose 5'-phosphate)-DNA + a 5'-end 5'-phospho-2'-deoxyribonucleoside-DNA + H(+). Its function is as follows. Involved in base excision repair of DNA damaged by oxidation or by mutagenic agents. Acts as a DNA glycosylase that recognizes and removes damaged bases. Has a preference for oxidized pyrimidines, such as thymine glycol, formamidopyrimidine (Fapy) and 5-hydroxyuracil. Has marginal activity towards 8-oxoguanine. Has AP (apurinic/apyrimidinic) lyase activity and introduces nicks in the DNA strand. Cleaves the DNA backbone by beta-delta elimination to generate a single-strand break at the site of the removed base with both 3'- and 5'-phosphates. Has DNA glycosylase/lyase activity towards mismatched uracil and thymine, in particular in U:C and T:C mismatches. Specifically binds 5-hydroxymethylcytosine (5hmC), suggesting that it acts as a specific reader of 5hmC. In Mus musculus (Mouse), this protein is Endonuclease 8-like 1 (Neil1).